Reading from the N-terminus, the 300-residue chain is Centromere protein O (300 aa).

Coiled-coil stretches lie at residues 18 to 42 (LAHLERLETQVSRSRKQSEELQSVQ) and 83 to 109 (NQTVEINEQEALEEKLENVKAILQAYH). Ser-35 bears the Phosphoserine mark.

It belongs to the CENP-O/MCM21 family. As to quaternary structure, component of the CENPA-CAD complex, composed of CENPI, CENPK, CENPL, CENPO, CENPP, CENPQ, CENPR and CENPS. The CENPA-CAD complex interacts with the CENPA-NAC complex, at least composed of CENPA, CENPC, CENPH, CENPM, CENPN, CENPT and CENPU.

The protein localises to the nucleus. Its subcellular location is the chromosome. The protein resides in the centromere. It is found in the kinetochore. Functionally, component of the CENPA-CAD (nucleosome distal) complex, a complex recruited to centromeres which is involved in assembly of kinetochore proteins, mitotic progression and chromosome segregation. May be involved in incorporation of newly synthesized CENPA into centromeres via its interaction with the CENPA-NAC complex. Modulates the kinetochore-bound levels of NDC80 complex. The protein is Centromere protein O (CENPO) of Homo sapiens (Human).